The chain runs to 473 residues: H(+)/Cl(-) exchange transporter ClcA (473 aa).

At 1-32 (MKTDTPSLETPQAARLRRRQLIRQLLERDKTP) the chain is on the cytoplasmic side. A helical transmembrane segment spans residues 33–69 (LAILFMAAVVGTLVGLAAVAFDKGVAWLQNQRMGALV). Over 70-76 (HTADNYP) the chain is Periplasmic. Residues 77–100 (LLLTVAFLCSAVLAMFGYFLVRKY) form a helical membrane-spanning segment. The Selectivity filter part_1 signature appears at 106–110 (GSGIP). Chloride is bound at residue Ser107. The segment at residues 109 to 116 (IPEIEGAL) is an intramembrane region (helical). Topologically, residues 117-123 (EDQRPVR) are cytoplasmic. 2 helical membrane passes run 124–141 (WWRVLPVKFFGGLGTLGG) and 148–166 (EGPTVQIGGNIGRMVLDIF). Residues 146–150 (GREGP) carry the Selectivity filter part_2 motif. At 167-176 (RLKGDEARHT) the chain is on the cytoplasmic side. 2 intramembrane regions (helical) span residues 177–189 (LLATGAAAGLAAA) and 193–201 (PLAGILFII). Topologically, residues 202–214 (EEMRPQFRYTLIS) are cytoplasmic. Residues 215–232 (IKAVFIGVIMSTIMYRIF) form a helical membrane-spanning segment. The Periplasmic portion of the chain corresponds to 233 to 252 (NHEVALIDVGKLSDAPLNTL). A helical transmembrane segment spans residues 253-281 (WLYLILGIIFGIFGPIFNKWVLGMQDLLH). Topologically, residues 282-287 (RVHGGN) are cytoplasmic. A helical transmembrane segment spans residues 288–309 (ITKWVLMGGAIGGLCGLLGFVA). The Periplasmic segment spans residues 310-329 (PATSGGGFNLIPIATAGNFS). 2 consecutive transmembrane segments (helical) span residues 330–349 (MGMLVFIFVARVITTLLCFS) and 355–376 (GIFAPMLALGTVLGTAFGMVAV). The short motif at 355 to 359 (GIFAP) is the Selectivity filter part_3 element. Chloride-binding residues include Ile356 and Phe357. Over 377 to 386 (ELFPQYHLEA) the chain is Periplasmic. The helical intramembrane region spans 387-401 (GTFAIAGMGALLAAS). Positions 402-404 (IRA) form an intramembrane region, note=Loop between two helices. The helical intramembrane region spans 405-416 (PLTGIILVLEMT). The segment at residues 417–421 (DNYQL) is an intramembrane region (note=Loop between two helices). A helical transmembrane segment spans residues 422–438 (ILPMIITGLGATLLAQF). Residues 439 to 473 (TGGKPLYSAILARTLAKQEAEQLARSKAASASENT) lie on the Cytoplasmic side of the membrane. Position 445 (Tyr445) interacts with chloride.

The protein belongs to the chloride channel (TC 2.A.49) family. ClcA subfamily. As to quaternary structure, homodimer.

It is found in the cell inner membrane. The catalysed reaction is 2 chloride(in) + H(+)(out) = 2 chloride(out) + H(+)(in). Its function is as follows. Proton-coupled chloride transporter. Functions as antiport system and exchanges two chloride ions for 1 proton. Probably acts as an electrical shunt for an outwardly-directed proton pump that is linked to amino acid decarboxylation, as part of the extreme acid resistance (XAR) response. The sequence is that of H(+)/Cl(-) exchange transporter ClcA from Escherichia coli O139:H28 (strain E24377A / ETEC).